We begin with the raw amino-acid sequence, 191 residues long: Pyridoxal 5'-phosphate synthase subunit PdxT (191 aa).

Residue 46 to 48 (GES) participates in L-glutamine binding. Cys-78 (nucleophile) is an active-site residue. L-glutamine contacts are provided by residues Arg-105 and 133 to 134 (IR). Active-site charge relay system residues include His-169 and Glu-171.

It belongs to the glutaminase PdxT/SNO family. In terms of assembly, in the presence of PdxS, forms a dodecamer of heterodimers. Only shows activity in the heterodimer.

The enzyme catalyses aldehydo-D-ribose 5-phosphate + D-glyceraldehyde 3-phosphate + L-glutamine = pyridoxal 5'-phosphate + L-glutamate + phosphate + 3 H2O + H(+). It carries out the reaction L-glutamine + H2O = L-glutamate + NH4(+). It participates in cofactor biosynthesis; pyridoxal 5'-phosphate biosynthesis. Functionally, catalyzes the hydrolysis of glutamine to glutamate and ammonia as part of the biosynthesis of pyridoxal 5'-phosphate. The resulting ammonia molecule is channeled to the active site of PdxS. This chain is Pyridoxal 5'-phosphate synthase subunit PdxT, found in Fervidobacterium nodosum (strain ATCC 35602 / DSM 5306 / Rt17-B1).